The chain runs to 386 residues: Enoyl-[acyl-carrier-protein] reductase 1, mitochondrial (386 aa).

The transit peptide at 1 to 22 (MYSVLKQSIRPRLLATHNQFRT) directs the protein to the mitochondrion. Tyr-79 acts as the Proton donor in catalysis. NADP(+)-binding positions include Asn-172, 199-202 (TSAV), 222-224 (RDR), 296-299 (YGGM), 321-323 (FWV), and Lys-381.

Belongs to the zinc-containing alcohol dehydrogenase family. Quinone oxidoreductase subfamily. As to quaternary structure, homodimer and heterodimer with ETR2.

Its subcellular location is the mitochondrion. The catalysed reaction is a 2,3-saturated acyl-[ACP] + NADP(+) = a (2E)-enoyl-[ACP] + NADPH + H(+). The enzyme catalyses (2E,4E)-hexadienoyl-CoA + NADPH + H(+) = (4E)-hexenoyl-CoA + NADP(+). It carries out the reaction (2E)-hexenoyl-CoA + NADPH + H(+) = hexanoyl-CoA + NADP(+). In terms of biological role, catalyzes the NADPH-dependent reduction of trans-2-enoyl thioesters in mitochondrial fatty acid synthesis (fatty acid synthesis type II). Fatty acid chain elongation in mitochondria uses acyl carrier protein (ACP) as an acyl group carrier, but the enzyme accepts both ACP and CoA thioesters as substrates in vitro. Required for respiration and the maintenance of the mitochondrial compartment. The sequence is that of Enoyl-[acyl-carrier-protein] reductase 1, mitochondrial (ETR1) from Candida tropicalis (Yeast).